The following is a 57-amino-acid chain: UPF0337 protein SAV_1088 (57 aa).

Composition is skewed to basic and acidic residues over residues 1 to 15 (MAGD…EQAK) and 36 to 57 (QAEK…VFKH). Residues 1-57 (MAGDQKAKAKMEQAKGKAKAAAGRAVGNERMAAEGQAEKSKGDARQAKEKTKDVFKH) form a disordered region.

It belongs to the UPF0337 (CsbD) family.

The polypeptide is UPF0337 protein SAV_1088 (Streptomyces avermitilis (strain ATCC 31267 / DSM 46492 / JCM 5070 / NBRC 14893 / NCIMB 12804 / NRRL 8165 / MA-4680)).